The chain runs to 581 residues: MNYRRNICLRIGWMLLFAFIPAYAGHSAEEWKRRSIYQIITDRFSLEEGATERIPCDPVRFMYCGGTWNGIRNHLDYIQGMGFDAIWISPIFENVEGNDIDGSSYHGYWTTNLYELNHHFGTKEEFMELIQELHKRDIWILLDVAINSMAINGPLEQMSFEKVIPFNDASFFHPHCWVDYESNDIESVQNCWLGDENLLLADVDTENEVVLSVLEKWIKNVVQEYDIDGIRFDAIKHAPIEFWLRMSKAADIFTIGEYFTGSPAEACDYQNSGLDSFLNFPLYWPITWAFNNTGLQCEALAIAINQINEECNDINVLGTFIGNHDLPRISHNNTDQARIMNAITFVMMWDGIPIIYYGTEQNFNSYHDPFNREALWLSNFDMENVYYKLIGILNRFRKSVQRQEENYVNTRSTILSVKIHHIVVQKLNVITVLNNYGIHNEERLSIVFKPLGASPKDTFFDIINNQKYVVNTDGTLKVVITNGFPIVLYPTSKIETSLPQFTATLLPEITFVPSITVTTHYVLPTLLAPLGYDIREHPGGQQFWNTLTAKSEAKTIRSFTKLKLFILLIAVPFALPMIILI.

Positions 1 to 24 are cleaved as a signal peptide; the sequence is MNYRRNICLRIGWMLLFAFIPAYA. An intrachain disulfide couples Cys-56 to Cys-64. A substrate-binding site is contributed by Trp-109. Asn-147 provides a ligand contact to Ca(2+). A disulfide bridge links Cys-176 with Cys-191. Asp-202 serves as a coordination point for Ca(2+). Arg-231 provides a ligand contact to substrate. Residues Asp-233, His-237, and Glu-257 each contribute to the Ca(2+) site. The Nucleophile role is filled by Asp-233. 236-237 is a binding site for substrate; the sequence is KH. Glu-257 serves as the catalytic Proton donor. Gly-261 is a binding site for substrate. The cysteines at positions 267 and 311 are disulfide-linked. The N-linked (GlcNAc...) asparagine glycan is linked to Asn-291. Residue Asp-325 participates in substrate binding. N-linked (GlcNAc...) asparagine glycosylation is present at Asn-332. Arg-372 serves as a coordination point for substrate. Ser-551 is lipidated: GPI-anchor amidated serine. Positions 552–581 are cleaved as a propeptide — removed in mature form; the sequence is EAKTIRSFTKLKLFILLIAVPFALPMIILI.

Belongs to the glycosyl hydrolase 13 family. Ca(2+) serves as cofactor.

It localises to the cell membrane. The enzyme catalyses Endohydrolysis of (1-&gt;4)-alpha-D-glucosidic linkages in polysaccharides containing three or more (1-&gt;4)-alpha-linked D-glucose units.. The sequence is that of Alpha-amylase 2 (aah2) from Schizosaccharomyces pombe (strain 972 / ATCC 24843) (Fission yeast).